Here is an 85-residue protein sequence, read N- to C-terminus: uncharacterized protein (85 aa).

The protein localises to the mitochondrion. This is an uncharacterized protein from Paramecium tetraurelia.